The primary structure comprises 545 residues: CTP synthase (545 aa).

The interval 1-266 (MTTNYIFVTG…DDYICKRFSL (266 aa)) is amidoligase domain. Serine 14 provides a ligand contact to CTP. Residue serine 14 participates in UTP binding. ATP is bound by residues 15–20 (SLGKGI) and aspartate 72. Mg(2+)-binding residues include aspartate 72 and glutamate 140. Residues 147 to 149 (DIE), 187 to 192 (KTKPTQ), and lysine 223 each bind CTP. Residues 187-192 (KTKPTQ) and lysine 223 contribute to the UTP site. Position 239-241 (239-241 (KDV)) interacts with ATP. A Glutamine amidotransferase type-1 domain is found at 291–542 (TIGMVGKYIE…VKAASEFQKR (252 aa)). An L-glutamine-binding site is contributed by glycine 352. Cysteine 379 acts as the Nucleophile; for glutamine hydrolysis in catalysis. Residues 380–383 (LGMQ), glutamate 403, and arginine 470 contribute to the L-glutamine site. Residues histidine 515 and glutamate 517 contribute to the active site.

The protein belongs to the CTP synthase family. As to quaternary structure, homotetramer.

The catalysed reaction is UTP + L-glutamine + ATP + H2O = CTP + L-glutamate + ADP + phosphate + 2 H(+). The enzyme catalyses L-glutamine + H2O = L-glutamate + NH4(+). It catalyses the reaction UTP + NH4(+) + ATP = CTP + ADP + phosphate + 2 H(+). It functions in the pathway pyrimidine metabolism; CTP biosynthesis via de novo pathway; CTP from UDP: step 2/2. Allosterically activated by GTP, when glutamine is the substrate; GTP has no effect on the reaction when ammonia is the substrate. The allosteric effector GTP functions by stabilizing the protein conformation that binds the tetrahedral intermediate(s) formed during glutamine hydrolysis. Inhibited by the product CTP, via allosteric rather than competitive inhibition. Catalyzes the ATP-dependent amination of UTP to CTP with either L-glutamine or ammonia as the source of nitrogen. Regulates intracellular CTP levels through interactions with the four ribonucleotide triphosphates. The polypeptide is CTP synthase (Escherichia coli O127:H6 (strain E2348/69 / EPEC)).